We begin with the raw amino-acid sequence, 102 residues long: Aspartyl/glutamyl-tRNA(Asn/Gln) amidotransferase subunit C (102 aa).

The protein belongs to the GatC family. As to quaternary structure, heterotrimer of A, B and C subunits.

The catalysed reaction is L-glutamyl-tRNA(Gln) + L-glutamine + ATP + H2O = L-glutaminyl-tRNA(Gln) + L-glutamate + ADP + phosphate + H(+). It catalyses the reaction L-aspartyl-tRNA(Asn) + L-glutamine + ATP + H2O = L-asparaginyl-tRNA(Asn) + L-glutamate + ADP + phosphate + 2 H(+). In terms of biological role, allows the formation of correctly charged Asn-tRNA(Asn) or Gln-tRNA(Gln) through the transamidation of misacylated Asp-tRNA(Asn) or Glu-tRNA(Gln) in organisms which lack either or both of asparaginyl-tRNA or glutaminyl-tRNA synthetases. The reaction takes place in the presence of glutamine and ATP through an activated phospho-Asp-tRNA(Asn) or phospho-Glu-tRNA(Gln). The protein is Aspartyl/glutamyl-tRNA(Asn/Gln) amidotransferase subunit C of Bordetella parapertussis (strain 12822 / ATCC BAA-587 / NCTC 13253).